The sequence spans 497 residues: MSNQHIEELNDQQIVRREKMMALAEQGIDPFGKRFGRTANSAELKENYADKTKEELHELNETAIVAGRLMTKRGKGKVGFAHLQDREGQIQLYVRKDSVGEDNYEIFKKADLGDFIGVEGEVMRTDMGELSIKATKLTHLSKSLRPLPEKFHGLTDIETIYRKRHLDLISNRESFDRFVTRSKMISEIRRYLDGLDFLEVETPVLHNEAGGAAARPFVTHHNAQNIDMVLRIATELHLKRLIVGGMERVYEIGRIFRNEGMDATHNPEFTSIEVYQAYADYLDIMNLTEGIIQHAAKAVKGDGPIDYQGTEIRINEPFKRVHMVDAIKEVTGVDFWPEMTVEEAIALAKEKQVPLEKHFTSVGHIINAFFEEFVEETLVQPTFVFGHPVEVSPLAKKNPEDTRFTDRFELFIMTKEYANAFTELNDPIDQLSRFEAQAQAKELGDDEATGIDYDFVEALEYGMPPTGGLGIGIDRLCMLLTNTTTIRDVLLFPTMKP.

Residues Glu-409 and Glu-416 each contribute to the Mg(2+) site.

Belongs to the class-II aminoacyl-tRNA synthetase family. As to quaternary structure, homodimer. It depends on Mg(2+) as a cofactor.

Its subcellular location is the cytoplasm. It carries out the reaction tRNA(Lys) + L-lysine + ATP = L-lysyl-tRNA(Lys) + AMP + diphosphate. The protein is Lysine--tRNA ligase of Streptococcus pyogenes serotype M3 (strain ATCC BAA-595 / MGAS315).